A 305-amino-acid chain; its full sequence is Superoxide dismutase [Fe] 2, chloroplastic (305 aa).

The transit peptide at 1–46 (MMNVAVTATPSSLLYSPLLLPSQGPNRRMQWKRNGKRRLGTKVAVS) directs the protein to the chloroplast. Positions 77, 129, 228, and 232 each coordinate Fe cation. Positions 270-305 (AVQREQEGTETEDEENPDDEVPEVYLDSDIDVSEVD) are disordered. Residues 277–305 (GTETEDEENPDDEVPEVYLDSDIDVSEVD) show a composition bias toward acidic residues.

This sequence belongs to the iron/manganese superoxide dismutase family. Heterodimer with FSD3. Interacts with MRL7 and PRDA1. Requires Fe cation as cofactor.

It localises to the plastid. The protein localises to the chloroplast thylakoid. It catalyses the reaction 2 superoxide + 2 H(+) = H2O2 + O2. Activated by cpn20/cpn21 (in vitro). Functionally, destroys superoxide anion radicals which are normally produced within the cells and which are toxic to biological systems. Plays important role in chloroplast development, particularly in the maintenance of thylakoids membranes. Seems to act as a heterodimer with FSD3. This chain is Superoxide dismutase [Fe] 2, chloroplastic (FSD2), found in Arabidopsis thaliana (Mouse-ear cress).